The sequence spans 576 residues: Acetylcholine receptor subunit alpha-like 2 (576 aa).

Residues 1–21 (MAPGCCTTRPRPIALLAHIWR) form the signal peptide. At 22 to 261 (HCKPLCLLLV…FFNITLRRKT (240 aa)) the chain is on the extracellular side. Asn-65 carries N-linked (GlcNAc...) asparagine glycosylation. Disulfide bonds link Cys-169-Cys-183 and Cys-243-Cys-244. Asn-254 carries N-linked (GlcNAc...) asparagine glycosylation. The next 3 helical transmembrane spans lie at 262–285 (LFYT…VFYL), 293–311 (IALC…LLIS), and 327–346 (YLLF…IIIL). The Cytoplasmic portion of the chain corresponds to 347–526 (NIHYRKPSTH…WGFVAMVMDR (180 aa)). A helical transmembrane segment spans residues 527 to 545 (LFLWLFMIASLVGTFVILG). N-linked (GlcNAc...) asparagine glycosylation occurs at Asn-570.

It belongs to the ligand-gated ion channel (TC 1.A.9) family. Acetylcholine receptor (TC 1.A.9.1) subfamily. CNS in embryos.

The protein resides in the postsynaptic cell membrane. Its subcellular location is the cell membrane. Its function is as follows. After binding acetylcholine, the AChR responds by an extensive change in conformation that affects all subunits and leads to opening of an ion-conducting channel across the plasma membrane. The protein is Acetylcholine receptor subunit alpha-like 2 (nAChRalpha2) of Drosophila melanogaster (Fruit fly).